A 302-amino-acid polypeptide reads, in one-letter code: Sulfate adenylyltransferase subunit 2 (302 aa).

Belongs to the PAPS reductase family. CysD subfamily. Heterodimer composed of CysD, the smaller subunit, and CysN.

The enzyme catalyses sulfate + ATP + H(+) = adenosine 5'-phosphosulfate + diphosphate. The protein operates within sulfur metabolism; hydrogen sulfide biosynthesis; sulfite from sulfate: step 1/3. In terms of biological role, with CysN forms the ATP sulfurylase (ATPS) that catalyzes the adenylation of sulfate producing adenosine 5'-phosphosulfate (APS) and diphosphate, the first enzymatic step in sulfur assimilation pathway. APS synthesis involves the formation of a high-energy phosphoric-sulfuric acid anhydride bond driven by GTP hydrolysis by CysN coupled to ATP hydrolysis by CysD. This chain is Sulfate adenylyltransferase subunit 2, found in Xanthomonas oryzae pv. oryzae (strain MAFF 311018).